A 426-amino-acid chain; its full sequence is Glucose-6-phosphate isomerase (426 aa).

Glu282 serves as the catalytic Proton donor. Active-site residues include His303 and Lys417.

The protein belongs to the GPI family.

The protein localises to the cytoplasm. The catalysed reaction is alpha-D-glucose 6-phosphate = beta-D-fructose 6-phosphate. Its pathway is carbohydrate biosynthesis; gluconeogenesis. The protein operates within carbohydrate degradation; glycolysis; D-glyceraldehyde 3-phosphate and glycerone phosphate from D-glucose: step 2/4. Catalyzes the reversible isomerization of glucose-6-phosphate to fructose-6-phosphate. This chain is Glucose-6-phosphate isomerase, found in Onion yellows phytoplasma (strain OY-M).